The primary structure comprises 481 residues: G-protein coupled receptor 37-like 1 (481 aa).

The N-terminal stretch at M1–G24 is a signal peptide. The Extracellular portion of the chain corresponds to A25–M134. 2 disordered regions span residues L30 to E55 and L76 to T107. Positions T95–T107 are enriched in polar residues. A glycan (N-linked (GlcNAc...) asparagine) is linked at N105. A helical membrane pass occupies residues L135–V155. Residues W156–S167 are Cytoplasmic-facing. The helical transmembrane segment at I168–I188 threads the bilayer. The Extracellular portion of the chain corresponds to F189–A205. C203 and C286 are joined by a disulfide. A helical membrane pass occupies residues V206–I226. The Cytoplasmic segment spans residues D227 to K251. The helical transmembrane segment at L252–L272 threads the bilayer. The Extracellular portion of the chain corresponds to A273 to M310. Residues W311 to V331 form a helical membrane-spanning segment. Topologically, residues T332–T360 are cytoplasmic. Residues V361–V381 traverse the membrane as a helical segment. Residues V382–G398 are Extracellular-facing. The helical transmembrane segment at L399–I419 threads the bilayer. Over C420 to C481 the chain is Cytoplasmic. The residue at position 471 (S471) is a Phosphoserine. Residue T479 is modified to Phosphothreonine.

It belongs to the G-protein coupled receptor 1 family. As to quaternary structure, interacts with the PTCH1 receptor. In terms of processing, undergoes metalloprotease-mediated cleavage which reduces its constitutive activity. Post-translationally, ubiquitinated. As to expression, highly expressed in brain.

It localises to the cell membrane. The protein localises to the cell projection. It is found in the cilium membrane. Functionally, G-protein coupled receptor. Has been shown to bind the neuroprotective and glioprotective factor prosaposin (PSAP), leading to endocytosis followed by an ERK phosphorylation cascade. However, other studies have shown that prosaposin does not increase activity. It has been suggested that GPR37L1 is a constitutively active receptor which signals through the guanine nucleotide-binding protein G(s) subunit alpha. Participates in the regulation of postnatal cerebellar development by modulating the Shh pathway. Regulates baseline blood pressure in females and protects against cardiovascular stress in males. Mediates inhibition of astrocyte glutamate transporters and reduction in neuronal N-methyl-D-aspartate receptor activity. The sequence is that of G-protein coupled receptor 37-like 1 (Gpr37l1) from Rattus norvegicus (Rat).